A 696-amino-acid polypeptide reads, in one-letter code: Neurogenic protein big brain (696 aa).

The Cytoplasmic segment spans residues 1–71; the sequence is MADESLHTVP…LEFWRSIISE (71 aa). Residue Ser-46 is modified to Phosphoserine. Thr-47 carries the post-translational modification Phosphothreonine. A helical transmembrane segment spans residues 72–93; the sequence is CLASFMYVFIVCGAAAGVGVGA. The Extracellular segment spans residues 94–97; sequence SVSS. The helical transmembrane segment at 98-118 threads the bilayer; the sequence is VLLATALASGLAMATLTQCFL. Residues 119 to 143 lie on the Cytoplasmic side of the membrane; it reads HISGAHINPAVTLALCVVRSISPIR. The NPA 1 signature appears at 126-128; that stretch reads NPA. A helical membrane pass occupies residues 144 to 167; it reads AAMYITAQCGGGIAGAALLYGVTV. Topologically, residues 168-189 are extracellular; that stretch reads PGYQGNLQAAISHSAALAAWER. The helical transmembrane segment at 190–208 threads the bilayer; the sequence is FGVEFILTFLVVLCYFVST. Residues 209–213 are Cytoplasmic-facing; the sequence is DPMKK. A helical transmembrane segment spans residues 214–234; that stretch reads FMGNSAASIGCAYSACCFVSM. Residues 235–256 lie on the Extracellular side of the membrane; that stretch reads PYLNPARSLGPSFVLNKWDSHW. Positions 238-240 match the NPA 2 motif; the sequence is NPA. The chain crosses the membrane as a helical span at residues 257–273; sequence VYWFGPLVGGMASGLVY. Tyr-273 bears the Phosphotyrosine; by Src mark. Residues 274–696 lie on the Cytoplasmic side of the membrane; it reads EYIFNSRNRN…HYGMLPLRPN (423 aa). A Phosphoserine modification is found at Ser-300. The tract at residues 314–345 is disordered; it reads NKYQQSQGTYPRGQSNGNGGGQAAGNGQHQAA. The residue at position 367 (Tyr-367) is a Phosphotyrosine; by Abl. A Phosphotyrosine; by Src modification is found at Tyr-384. Phosphoserine is present on Ser-394. 2 disordered regions span residues 436 to 634 and 650 to 696; these read MRTQ…KVSA and TSQG…LRPN. 2 stretches are compositionally biased toward low complexity: residues 439–451 and 462–472; these read QQQQ…QQQQ and QNQNVQNQMQQ. A Phosphotyrosine; by Src modification is found at Tyr-478. Positions 487 to 532 are enriched in low complexity; that stretch reads QQQPIQQQQQQQQQQQLQQQQPNMGVQQQQMQPPPQMMSDPQQQPQ. Basic and acidic residues predominate over residues 549–558; sequence GNHKYDRRDP. The residue at position 576 (Ser-576) is a Phosphoserine. The segment covering 576-587 has biased composition (low complexity); sequence SDDSSYGSYHGS. Residues 599–616 are compositionally biased toward pro residues; that stretch reads EPSPPPPPMLMYAPPPQP. A Phosphotyrosine; by Abl modification is found at Tyr-610. Residues 659–686 are compositionally biased toward low complexity; sequence QQQQQQQQQQQQQQQQQQQQMMMQQQQQ.

Belongs to the MIP/aquaporin (TC 1.A.8) family. Phosphorylated at its C-terminus. In terms of tissue distribution, detected in all tissues with neurogenic abilities, for example the neurogenic ectoderm.

The protein localises to the membrane. Essential for proper differentiation of ectoderm. Acts synergistically with neurogenic locus proteins Notch and Delta during the separation of neural and epidermal cell lineages in response to the lateral inhibition signal. Voltage-insensitive monovalent cation channel. Ion transport is blocked by the presence of divalent cations. The sequence is that of Neurogenic protein big brain (bib) from Drosophila melanogaster (Fruit fly).